We begin with the raw amino-acid sequence, 171 residues long: Auxin-responsive protein IAA33 (171 aa).

2 stretches are compositionally biased toward polar residues: residues 1 to 11 (MNSFEPQSQDS) and 19 to 32 (DNST…TTTP). The tract at residues 1–51 (MNSFEPQSQDSLQRRFHQDNSTTQQPRDTTTPFIPKPASKNHNNSNSSSGA) is disordered. Residues 40–49 (KNHNNSNSSS) are compositionally biased toward low complexity. Residues 72–162 (VPPVTVVLEG…KRIRILPVKG (91 aa)) form the PB1 domain.

It belongs to the Aux/IAA family. In terms of assembly, homodimers and heterodimers.

The protein resides in the nucleus. Functionally, aux/IAA proteins are short-lived transcriptional factors that function as repressors of early auxin response genes at low auxin concentrations. Repression is thought to result from the interaction with auxin response factors (ARFs), proteins that bind to the auxin-responsive promoter element (AuxRE). Formation of heterodimers with ARF proteins may alter their ability to modulate early auxin response genes expression. The sequence is that of Auxin-responsive protein IAA33 (IAA33) from Arabidopsis thaliana (Mouse-ear cress).